Reading from the N-terminus, the 247-residue chain is Proteasome subunit alpha type-7-B (247 aa).

It belongs to the peptidase T1A family. In terms of assembly, the 26S proteasome consists of a 20S proteasome core and two 19S regulatory subunits. The 20S proteasome core is composed of 28 subunits that are arranged in four stacked rings, resulting in a barrel-shaped structure. The two end rings are each formed by seven alpha subunits, and the two central rings are each formed by seven beta subunits. The catalytic chamber with the active sites is on the inside of the barrel. Post-translationally, phosphorylated in G2 phase.

The protein localises to the cytoplasm. Its subcellular location is the nucleus. The proteasome is a multicatalytic proteinase complex which is characterized by its ability to cleave peptides with Arg, Phe, Tyr, Leu, and Glu adjacent to the leaving group at neutral or slightly basic pH. The proteasome has an ATP-dependent proteolytic activity. The polypeptide is Proteasome subunit alpha type-7-B (psma7-b) (Xenopus laevis (African clawed frog)).